Consider the following 259-residue polypeptide: (3R)-3-hydroxyacyl-CoA dehydrogenase (259 aa).

Residues 13–21 (LVTGAGSGI) and 40–41 (DL) each bind NAD(+). Position 58 is a phosphoserine (Ser-58). 72-74 (ADV) contributes to the NAD(+) binding site. Ser-154 serves as a coordination point for substrate. Lys-158 bears the N6-succinyllysine mark. The Proton acceptor role is filled by Tyr-167. Residues 167 to 171 (YAASK) and 200 to 202 (ITT) each bind NAD(+). Position 171 is an N6-succinyllysine (Lys-171).

This sequence belongs to the short-chain dehydrogenases/reductases (SDR) family. Heterotetramer with CBR4; contains two molecules of HSD17B8 and CBR4.

It is found in the mitochondrion matrix. The catalysed reaction is a (3R)-3-hydroxyacyl-CoA + NAD(+) = a 3-oxoacyl-CoA + NADH + H(+). The enzyme catalyses 17beta-estradiol + NAD(+) = estrone + NADH + H(+). It catalyses the reaction testosterone + NAD(+) = androst-4-ene-3,17-dione + NADH + H(+). It carries out the reaction 17beta-hydroxy-5alpha-androstan-3-one + NAD(+) = 5alpha-androstan-3,17-dione + NADH + H(+). The protein operates within steroid biosynthesis; estrogen biosynthesis. Its pathway is lipid metabolism; fatty acid biosynthesis. It participates in lipid metabolism; mitochondrial fatty acid beta-oxidation. Its function is as follows. Required for the solubility and assembly of the heterotetramer 3-ketoacyl-[acyl carrier protein] (ACP) reductase functional complex (KAR or KAR1) that forms part of the mitochondrial fatty acid synthase (mtFAS). Alpha-subunit of the KAR complex that acts as scaffold protein required for the stability of carbonyl reductase type-4 (CBR4, beta-subunit of the KAR complex) and for its 3-ketoacyl-ACP reductase activity, thereby participating in mitochondrial fatty acid biosynthesis. Catalyzes the NAD-dependent conversion of (3R)-3-hydroxyacyl-CoA into 3-ketoacyl-CoA (3-oxoacyl-CoA) with no chain length preference; this enzymatic activity is not needed for the KAR function. Prefers (3R)-3-hydroxyacyl-CoA over (3S)-3-hydroxyacyl-CoA and displays enzymatic activity only in the presence of NAD(+). Cooperates with enoyl-CoA hydratase 1 in mitochondria, together they constitute an alternative route to the auxiliary enzyme pathways for the breakdown of Z-PUFA (cis polyunsaturated fatty acid) enoyl-esters. NAD-dependent 17-beta-hydroxysteroid dehydrogenase with highest activity towards estradiol (17beta-estradiol or E2). Has very low activity towards testosterone and dihydrotestosterone (17beta-hydroxy-5alpha-androstan-3-one). Primarily an oxidative enzyme, it can switch to a reductive mode determined in the appropriate physiologic milieu and catalyze the reduction of estrone (E1) to form biologically active 17beta-estradiol. In Canis lupus familiaris (Dog), this protein is (3R)-3-hydroxyacyl-CoA dehydrogenase (HSD17B8).